The primary structure comprises 253 residues: Tetraspanin-3 (253 aa).

Residues 1–11 are Cytoplasmic-facing; it reads MGQCGITSSKT. A helical transmembrane segment spans residues 12–32; it reads VLVFLNLIFWGAAGILCYVGA. The Extracellular segment spans residues 33–50; sequence YVFITYDDYDHFFEDVYT. A helical membrane pass occupies residues 51 to 71; sequence LIPAVVIIAVGALLFIIGLIG. Residues 72–85 lie on the Cytoplasmic side of the membrane; it reads CCATIRESRCGLAT. A helical transmembrane segment spans residues 86–106; that stretch reads FVIILLLVFVTEVVVVVLGYV. Residues 107-212 are Extracellular-facing; the sequence is YRAKVENEVD…KKLQEIMMHV (106 aa). N-linked (GlcNAc...) asparagine glycans are attached at residues asparagine 127, asparagine 152, asparagine 167, and asparagine 183. A helical transmembrane segment spans residues 213–233; the sequence is IWAALAFAAIQLLGMLCACIV. The Cytoplasmic portion of the chain corresponds to 234–253; the sequence is LCRRSRDPAYELLITGGAYA.

This sequence belongs to the tetraspanin (TM4SF) family. In terms of assembly, interacts with claudin-11/CLDN11 and integrins.

The protein resides in the membrane. Its function is as follows. Regulates the proliferation and migration of oligodendrocytes, a process essential for normal myelination and repair. The chain is Tetraspanin-3 (TSPAN3) from Bos taurus (Bovine).